Consider the following 499-residue polypeptide: Potassium voltage-gated channel subfamily A member 2 (499 aa).

Residues 1 to 26 are disordered; it reads MTVATEDPADEAAALPGHPQDTYDPE. Positions 1–125 are tetramerization domain; that stretch reads MTVATEDPAD…YELGEEAMEM (125 aa). At 1–160 the chain is on the cytoplasmic side; it reads MTVATEDPAD…LLFEYPESSG (160 aa). A helical membrane pass occupies residues 161 to 182; sequence PARIIAIVSVMVILISIVSFCL. Over 183 to 221 the chain is Extracellular; it reads ETLPIFRDENEDMHGSGMTFHTYSNSTAGYQQSTSFTDP. The N-linked (GlcNAc...) asparagine glycan is linked to asparagine 207. Residues 222-243 form a helical membrane-spanning segment; sequence FFIVETLCIIWFSFEFLVRFFA. Cysteine 244 is lipidated: S-palmitoyl cysteine. At 244 to 254 the chain is on the cytoplasmic side; it reads CPSKAGFFTNI. The helical transmembrane segment at 255–275 threads the bilayer; it reads MNIIDIVAIIPYFITLGTELA. Residues 276 to 289 are Extracellular-facing; sequence EKPEDAQQGQQAMS. The helical; Voltage-sensor transmembrane segment at 290-310 threads the bilayer; sequence LAILRVIRLVRVFRIFKLSRH. At 311–325 the chain is on the cytoplasmic side; sequence SKGLQILGQTLKASM. Residues 312-325 are S4-S5 linker; the sequence is KGLQILGQTLKASM. A helical membrane pass occupies residues 326-347; the sequence is RELGLLIFFLFIGVILFSSAVY. At 348 to 361 the chain is on the extracellular side; it reads FAEADERDSQFPSI. An intramembrane region (helical) is located at residues 362 to 373; the sequence is PDAFWWAVVSMT. The Selectivity filter motif lies at 374-379; it reads TVGYGD. Residues 374–381 lie within the membrane without spanning it; it reads TVGYGDMV. Over 382–388 the chain is Extracellular; sequence PTTIGGK. A helical membrane pass occupies residues 389-417; the sequence is IVGSLCAIAGVLTIALPVPVIVSNFNYFY. The Cytoplasmic portion of the chain corresponds to 418-499; that stretch reads HRETEGEEQA…VNITKMLTDV (82 aa). Phosphotyrosine is present on tyrosine 429. Serine 434, serine 440, serine 441, and serine 449 each carry phosphoserine. The residue at position 458 (tyrosine 458) is a Phosphotyrosine. Residue serine 468 is modified to Phosphoserine. The PDZ-binding signature appears at 497–499; that stretch reads TDV.

It belongs to the potassium channel family. A (Shaker) (TC 1.A.1.2) subfamily. Kv1.2/KCNA2 sub-subfamily. Homotetramer and heterotetramer with other channel-forming alpha subunits, such as KCNA1, KCNA4, KCNA5, KCNA6 and KCNA7. Channel activity is regulated by interaction with the beta subunits, including KCNAB1 and KCNAB2. Identified in a complex with KCNA1 and KCNAB2. Identified in a complex with KCNA4 and FYN. Identified in a complex with KCNA5 and KCNAB1. Interacts with the beta subunit KCNAB1. Interacts with PTK2B. Interacts (via C-terminus) with CTTN. Interacts (via N-terminal cytoplasmic domain) with RHOA (GTP-bound form); this regulates channel activity by reducing location at the cell surface in response to CHRM1 activation. Interacts with DRD2. Interacts with SIGMAR1; cocaine consumption leads to increased interaction. Interacts with ADAM22. Interacts with CNTNAP2. Interacts (via C-terminus) with the PDZ domains of DLG1, DLG2 and DLG4. Interacts with ADAM11. Interacts with LYNX1. Phosphorylated on tyrosine residues; phosphorylation increases in response to ischemia. Phosphorylated on tyrosine residues by activated PTK2B/PYK2. Phosphorylation on tyrosine residues suppresses ion channel activity. Phosphorylated on tyrosine residues in response to CHRM1 activation; this abolishes interaction with CTTN. This is probably due to endocytosis of the phosphorylated channel subunits. Phosphorylated on serine residues in response to increased cAMP levels; phosphorylation is apparently not catalyzed by PKA. In terms of processing, N-glycosylated, with complex, sialylated N-glycans. In terms of tissue distribution, detected in portal vein myocytes (at protein level). Detected in portal vein. Brain, liver and kidney.

Its subcellular location is the cell membrane. The protein localises to the membrane. The protein resides in the cell projection. It localises to the axon. It is found in the synapse. Its subcellular location is the presynaptic cell membrane. The protein localises to the synaptosome. The protein resides in the endoplasmic reticulum membrane. It localises to the dendrite. It is found in the lamellipodium membrane. Its subcellular location is the cell junction. The protein localises to the paranodal septate junction. It carries out the reaction K(+)(in) = K(+)(out). Its activity is regulated as follows. Inhibited by 4-aminopyridine (4-AP). Inhibited by dendrotoxin (DTX) and charybdotoxin (CTX), but not by tetraethylammonium (TEA). Inhibited by tityustoxin-K alpha (TsTX-Kalpha), a toxin that is highly specific for KCNA2. Inhibited by maurotoxin. Inhibited by kappaM conotoxins kappaM-RIIIJ and kappaM-RIIIK. Functionally, voltage-gated potassium channel that mediates transmembrane potassium transport in excitable membranes, primarily in the brain and the central nervous system, but also in the cardiovascular system. Prevents aberrant action potential firing and regulates neuronal output. Forms tetrameric potassium-selective channels through which potassium ions pass in accordance with their electrochemical gradient. The channel alternates between opened and closed conformations in response to the voltage difference across the membrane. Can form functional homotetrameric channels and heterotetrameric channels that contain variable proportions of KCNA1, KCNA2, KCNA4, KCNA5, KCNA6, KCNA7, and possibly other family members as well; channel properties depend on the type of alpha subunits that are part of the channel. Channel properties are modulated by cytoplasmic beta subunits that regulate the subcellular location of the alpha subunits and promote rapid inactivation of delayed rectifier potassium channels. In vivo, membranes probably contain a mixture of heteromeric potassium channel complexes, making it difficult to assign currents observed in intact tissues to any particular potassium channel family member. Homotetrameric KCNA2 forms a delayed-rectifier potassium channel that opens in response to membrane depolarization, followed by slow spontaneous channel closure. In contrast, a heteromultimer formed by KCNA2 and KCNA4 shows rapid inactivation. Regulates neuronal excitability and plays a role as pacemaker in the regulation of neuronal action potentials. KCNA2-containing channels play a presynaptic role and prevent hyperexcitability and aberrant action potential firing. Response to toxins that are selective for KCNA2-containing potassium channels suggests that in Purkinje cells, dendritic subthreshold KCNA2-containing potassium channels prevent random spontaneous calcium spikes, suppressing dendritic hyperexcitability without hindering the generation of somatic action potentials, and thereby play an important role in motor coordination. Plays a role in the induction of long-term potentiation of neuron excitability in the CA3 layer of the hippocampus. May function as down-stream effector for G protein-coupled receptors and inhibit GABAergic inputs to basolateral amygdala neurons. May contribute to the regulation of neurotransmitter release, such as gamma-aminobutyric acid (GABA). Contributes to the regulation of the axonal release of the neurotransmitter dopamine. Reduced KCNA2 expression plays a role in the perception of neuropathic pain after peripheral nerve injury, but not acute pain. Plays a role in the regulation of the time spent in non-rapid eye movement (NREM) sleep. The protein is Potassium voltage-gated channel subfamily A member 2 (KCNA2) of Oryctolagus cuniculus (Rabbit).